A 640-amino-acid polypeptide reads, in one-letter code: MPPKEAPKKWKAPKGPKPTHRKNKNKLELGRAIKYARQKENAIEYLPDGEMRFTTDKHEANWVKLRSVTQESALDEFLSTAALADKDFTADRHSNVKIIRMDSGNDSATSQGFSMTNEQRGNLNAKQRALAKDLIVPRRPEWNEGMSKFQLDRQEKEAFLEWRRKLAHLQESNEDLLLTPFERNIEVWKQLWRVVERSDLVVQIVDARNPLLFRSVDLERYVKESDDRKANLLLVNKADLLTKKQRIAWAKYFISKNISFTFYSALRANQLLEKQKEMGEDYREQDFEEADKEGFDADEKVMEKVKILSIDQLEELFLSKAPNEPLLPPLPGQPPLINIGLVGYPNVGKSSTINSLVGAKKVSVSSTPGKTKHFQTIKLSDSVMLCDCPGLVFPNFAYNKGELVCNGVLPIDQLRDYIGPAGLVAERIPKYYIEAIYGIHIQTKSRDEGGNGDIPTAQELLVAYARARGYMTQGYGSADEPRASRYILKDYVNGKLLYVNPPPHLEDDTPYTREECEEFNKDLYVFDRLPDTRKEQVQNAAKAKGIDIVDLARDLNQLTFSAHTGGDTQKEAKSVTHGGKQAALYNAAEDLDRDFFKMNNVEGRLSTPFHKVQNSSAGKRHNKKNKSKNAKSKVFSIENN.

The segment at 1-26 is disordered; that stretch reads MPPKEAPKKWKAPKGPKPTHRKNKNK. Positions 9–24 are enriched in basic residues; the sequence is KWKAPKGPKPTHRKNK. Position 103 is a phosphoserine (Ser-103). One can recognise a CP-type G domain in the interval 188–394; that stretch reads WKQLWRVVER…LCDCPGLVFP (207 aa). GTP contacts are provided by residues 236-239, 343-350, and 387-390; these read NKAD, GYPNVGKS, and DCPG. The interval 607-640 is disordered; that stretch reads TPFHKVQNSSAGKRHNKKNKSKNAKSKVFSIENN. Basic residues predominate over residues 618–631; the sequence is GKRHNKKNKSKNAK.

This sequence belongs to the TRAFAC class YlqF/YawG GTPase family. LSG1 subfamily. In terms of assembly, associates with the 60S ribosomal subunit. Interacts with ARB1.

It is found in the cytoplasm. Its function is as follows. GTPase required for the nuclear export of the 60S ribosomal subunit. Acts by mediating the release of NMD3 from the 60S ribosomal subunit after export into the cytoplasm. The chain is Large subunit GTPase 1 (LSG1) from Saccharomyces cerevisiae (strain ATCC 204508 / S288c) (Baker's yeast).